A 346-amino-acid polypeptide reads, in one-letter code: Autoinducer 2 import system permease protein LsrC (346 aa).

9 helical membrane-spanning segments follow: residues 13–33, 38–58, 71–91, 92–112, 114–134, 154–174, 212–232, 248–268, and 283–303; these read LLAIVCLFVFPGALDSQYLSV, MVFSSAQILMLLAIGATMVML, GMCAVLLGVMLNAGYSLPVAC, LATLILGIVAGFFNGVLVAWL, IPAIVATLGTLGLYRGIMLLW, VFLGISAIGWFTLVLALLMAW, LNGGMAALAGIVFASQIGFIP, VLGGISLLGGSGTVIGAILGA, and IPAWWNDFIAGLVLLGVLVFD.

It belongs to the binding-protein-dependent transport system permease family. AraH/RbsC subfamily. The complex is composed of two ATP-binding proteins (LsrA), two transmembrane proteins (LsrC and LsrD) and a solute-binding protein (LsrB).

It is found in the cell inner membrane. Functionally, part of the ABC transporter complex LsrABCD involved in autoinducer 2 (AI-2) import. Probably responsible for the translocation of the substrate across the membrane. This Salmonella paratyphi B (strain ATCC BAA-1250 / SPB7) protein is Autoinducer 2 import system permease protein LsrC (lsrC).